A 332-amino-acid polypeptide reads, in one-letter code: Adenosine deaminase (332 aa).

The Zn(2+) site is built by His12 and His14. Residues His14, Asp16, and Gly170 each coordinate substrate. His197 lines the Zn(2+) pocket. The active-site Proton donor is Glu200. Residue Asp278 coordinates Zn(2+). Asp279 contributes to the substrate binding site.

It belongs to the metallo-dependent hydrolases superfamily. Adenosine and AMP deaminases family. Adenosine deaminase subfamily. It depends on Zn(2+) as a cofactor.

It catalyses the reaction adenosine + H2O + H(+) = inosine + NH4(+). It carries out the reaction 2'-deoxyadenosine + H2O + H(+) = 2'-deoxyinosine + NH4(+). Functionally, catalyzes the hydrolytic deamination of adenosine and 2-deoxyadenosine. The chain is Adenosine deaminase from Serratia proteamaculans (strain 568).